The following is a 409-amino-acid chain: Dihydrolipoyllysine-residue succinyltransferase component of 2-oxoglutarate dehydrogenase complex (409 aa).

The region spanning 2-77 (AIEILVPDLP…VSKQLLGKIS (76 aa)) is the Lipoyl-binding domain. Position 43 is an N6-lipoyllysine (Lys43). The segment covering 83–107 (DVSSATLKATNEPTPSDRQNAAIEN) has biased composition (polar residues). Residues 83–114 (DVSSATLKATNEPTPSDRQNAAIENSHNHNAD) are disordered. One can recognise a Peripheral subunit-binding (PSBD) domain in the interval 114–151 (DQSPVIRRLLAEHDLQADQIQGSGVGGRLTREDIEREI). Residues His380 and Asp384 contribute to the active site.

The protein belongs to the 2-oxoacid dehydrogenase family. Forms a 24-polypeptide structural core with octahedral symmetry. Part of the 2-oxoglutarate dehydrogenase (OGDH) complex composed of E1 (2-oxoglutarate dehydrogenase), E2 (dihydrolipoamide succinyltransferase) and E3 (dihydrolipoamide dehydrogenase); the complex contains multiple copies of the three enzymatic components (E1, E2 and E3). Requires (R)-lipoate as cofactor.

The enzyme catalyses N(6)-[(R)-dihydrolipoyl]-L-lysyl-[protein] + succinyl-CoA = N(6)-[(R)-S(8)-succinyldihydrolipoyl]-L-lysyl-[protein] + CoA. The protein operates within amino-acid degradation; L-lysine degradation via saccharopine pathway; glutaryl-CoA from L-lysine: step 6/6. Its function is as follows. E2 component of the 2-oxoglutarate dehydrogenase (OGDH) complex which catalyzes the second step in the conversion of 2-oxoglutarate to succinyl-CoA and CO(2). This chain is Dihydrolipoyllysine-residue succinyltransferase component of 2-oxoglutarate dehydrogenase complex (sucB), found in Haemophilus influenzae (strain ATCC 51907 / DSM 11121 / KW20 / Rd).